The sequence spans 267 residues: Hydroxyethylthiazole kinase (267 aa).

Residue Met49 coordinates substrate. ATP contacts are provided by Arg124 and Thr170. Gly197 contributes to the substrate binding site.

Belongs to the Thz kinase family. Requires Mg(2+) as cofactor.

The enzyme catalyses 5-(2-hydroxyethyl)-4-methylthiazole + ATP = 4-methyl-5-(2-phosphooxyethyl)-thiazole + ADP + H(+). It functions in the pathway cofactor biosynthesis; thiamine diphosphate biosynthesis; 4-methyl-5-(2-phosphoethyl)-thiazole from 5-(2-hydroxyethyl)-4-methylthiazole: step 1/1. Functionally, catalyzes the phosphorylation of the hydroxyl group of 4-methyl-5-beta-hydroxyethylthiazole (THZ). The protein is Hydroxyethylthiazole kinase of Tolumonas auensis (strain DSM 9187 / NBRC 110442 / TA 4).